The primary structure comprises 183 residues: MNNIVKIPQIITILSEHSSEHKFGFNSDIFEANVINILLLLFGLIYVLKQFLGSSLNARQIKVLAAIQESEERLEQASARLSESEKQLAQTQIIIDQIKKEAQLTAGKVRSSILAQGQLDIERLAITGKSNIETAEKQIRRQIQQQITFLALKRVTLQLENQMSSEMQLRIIDNNIAKLGDQL.

A helical transmembrane segment spans residues 28–48 (DIFEANVINILLLLFGLIYVL).

This sequence belongs to the ATPase B chain family. As to quaternary structure, F-type ATPases have 2 components, F(1) - the catalytic core - and F(0) - the membrane proton channel. F(1) has five subunits: alpha(3), beta(3), gamma(1), delta(1), epsilon(1). F(0) has four main subunits: a(1), b(1), b'(1) and c(10-14). The alpha and beta chains form an alternating ring which encloses part of the gamma chain. F(1) is attached to F(0) by a central stalk formed by the gamma and epsilon chains, while a peripheral stalk is formed by the delta, b and b' chains.

It localises to the plastid. The protein localises to the chloroplast thylakoid membrane. F(1)F(0) ATP synthase produces ATP from ADP in the presence of a proton or sodium gradient. F-type ATPases consist of two structural domains, F(1) containing the extramembraneous catalytic core and F(0) containing the membrane proton channel, linked together by a central stalk and a peripheral stalk. During catalysis, ATP synthesis in the catalytic domain of F(1) is coupled via a rotary mechanism of the central stalk subunits to proton translocation. Functionally, component of the F(0) channel, it forms part of the peripheral stalk, linking F(1) to F(0). This is ATP synthase subunit b, chloroplastic from Pyropia yezoensis (Susabi-nori).